The sequence spans 517 residues: Putative pumilio homolog 21 (517 aa).

Disordered regions lie at residues 33–57 (NHQE…PPLL), 69–94 (KNNQ…PPLV), 107–130 (NHQE…PLLT), and 175–201 (FTPS…PPLS). Low complexity predominate over residues 42–51 (NTNINSNNNH). The segment covering 69-84 (KNNQEPGESGNTTINR) has biased composition (polar residues). A PUM-HD domain is found at 148-502 (ESSNNNYPNL…NTLRVIQEEI (355 aa)). Residues 177 to 190 (PSSLTQPDDSSSRY) show a composition bias toward polar residues. The stretch at 258 to 293 (TTKRIFLHLATNQYGSQALRILFRRSPSLDHLLFCA) is one Pumilio 1; degenerate repeat. A Pumilio 2 repeat occupies 294–328 (VDTNFFLLMSDKYGRGLIIPAIRAVDKTKKESLYK). One copy of the Pumilio 3; degenerate repeat lies at 329–363 (LTYEYTLHLARLETGCLALNNVLQEIRGIYRDLIF). Pumilio repeat units lie at residues 364 to 400 (ECVA…AIAE), 401 to 437 (RLRG…EEFR), and 438 to 473 (GNAK…PLLR).

Its subcellular location is the cytoplasm. Sequence-specific RNA-binding protein that regulates translation and mRNA stability by binding the 3'-UTR of target mRNAs. This is Putative pumilio homolog 21 (APUM21) from Arabidopsis thaliana (Mouse-ear cress).